Here is a 185-residue protein sequence, read N- to C-terminus: MINEINKDAQERMDKSVEALKNNLSKVRTGRAHPSLLSGISVEYYGAPTPLNQVANVVAEDARTLAITVFDKELTQKVEKAIMMSDLGLNPMSAGTIIRVPLPPLTEERRKDLVKIVRGEAEGSRVAVRNIRRDANSDLKGLLKDKEISEDEDRKAQDEIQKLTDVAVKKIDEVLAAKEKELMEV.

It belongs to the RRF family.

The protein localises to the cytoplasm. Functionally, responsible for the release of ribosomes from messenger RNA at the termination of protein biosynthesis. May increase the efficiency of translation by recycling ribosomes from one round of translation to another. The polypeptide is Ribosome-recycling factor (Vibrio campbellii (strain ATCC BAA-1116)).